Consider the following 93-residue polypeptide: Large ribosomal subunit protein uL23cz/uL23cy (93 aa).

The protein belongs to the universal ribosomal protein uL23 family. Part of the 50S ribosomal subunit.

Its subcellular location is the plastid. It localises to the chloroplast. In terms of biological role, binds to 23S rRNA. The sequence is that of Large ribosomal subunit protein uL23cz/uL23cy (rpl23-A) from Populus alba (White poplar).